The following is a 452-amino-acid chain: 3-phosphoshikimate 1-carboxyvinyltransferase (452 aa).

The segment at 1 to 23 is disordered; sequence MLNGSASKPATARKSAGLTGSVR. 3-phosphoshikimate contacts are provided by lysine 28, serine 29, and arginine 33. Lysine 28 is a binding site for phosphoenolpyruvate. Phosphoenolpyruvate is bound by residues glycine 100 and arginine 128. 4 residues coordinate 3-phosphoshikimate: serine 173, glutamine 175, aspartate 326, and lysine 353. Residue glutamine 175 participates in phosphoenolpyruvate binding. Aspartate 326 acts as the Proton acceptor in catalysis. Phosphoenolpyruvate contacts are provided by arginine 357 and arginine 405.

It belongs to the EPSP synthase family. As to quaternary structure, monomer.

It is found in the cytoplasm. It catalyses the reaction 3-phosphoshikimate + phosphoenolpyruvate = 5-O-(1-carboxyvinyl)-3-phosphoshikimate + phosphate. Its pathway is metabolic intermediate biosynthesis; chorismate biosynthesis; chorismate from D-erythrose 4-phosphate and phosphoenolpyruvate: step 6/7. In terms of biological role, catalyzes the transfer of the enolpyruvyl moiety of phosphoenolpyruvate (PEP) to the 5-hydroxyl of shikimate-3-phosphate (S3P) to produce enolpyruvyl shikimate-3-phosphate and inorganic phosphate. The chain is 3-phosphoshikimate 1-carboxyvinyltransferase from Rhizobium johnstonii (strain DSM 114642 / LMG 32736 / 3841) (Rhizobium leguminosarum bv. viciae).